A 146-amino-acid chain; its full sequence is 3-dehydroquinate dehydratase (146 aa).

The Proton acceptor role is filled by tyrosine 23. Positions 74, 80, and 87 each coordinate substrate. The active-site Proton donor is the histidine 100. Substrate-binding positions include 101 to 102 (IS) and arginine 111.

Belongs to the type-II 3-dehydroquinase family. As to quaternary structure, homododecamer.

The catalysed reaction is 3-dehydroquinate = 3-dehydroshikimate + H2O. It functions in the pathway metabolic intermediate biosynthesis; chorismate biosynthesis; chorismate from D-erythrose 4-phosphate and phosphoenolpyruvate: step 3/7. In terms of biological role, catalyzes a trans-dehydration via an enolate intermediate. The protein is 3-dehydroquinate dehydratase of Bacillus cereus (strain G9842).